The sequence spans 428 residues: MQELRLLCLVVLVGLAQACPEPCECGEKYGFHIADCAYRDLQAVPSGFPANVTTLSLSANQLPSLPGGAFREVPRLQSLWLAHNEIRSVAAGALASLSQLKSLDLSHNLISDFAWSDLHSLSALQLLKMDSNELTFIPRDAFRSLRALRSLQLNHNRLHTLAEGTFAPLTALSHLQINDNPFDCTCGIVWFKTWALTTAVSIPEQDNITCTSPHVLKGTRLNRLLPLPCSAPSVQLTYQPSQDGAELRPGFVLALHCDVDGQPAPQLHWHIQTPGGTVEITSPNVGADGRALPGVLAASSRPRFQAFANGSLLIPDFGKLEEGTYSCLATNELGSAESSVNVALATPGEGGEDALGRRFQGKAAEGKVCYTVDNEVQPSGPEDNVVIIYLSRARGPEAAATAEGVPGKQPPGLLLLGQSLLFLFLASF.

An N-terminal signal peptide occupies residues 1–18; it reads MQELRLLCLVVLVGLAQA. The LRRNT domain occupies 19–50; the sequence is CPEPCECGEKYGFHIADCAYRDLQAVPSGFPA. The N-linked (GlcNAc...) asparagine glycan is linked to asparagine 51. 5 LRR repeats span residues 51–72, 75–96, 99–122, 123–144, and 147–168; these read NVTT…AFRE, RLQS…ALAS, QLKS…HSLS, ALQL…AFRS, and ALRS…TFAP. The LRRCT domain maps to 180–231; the sequence is NPFDCTCGIVWFKTWALTTAVSIPEQDNITCTSPHVLKGTRLNRLLPLPCSA. Residues 232–343 form the Ig-like domain; the sequence is PSVQLTYQPS…GSAESSVNVA (112 aa). A disulfide bridge connects residues cysteine 257 and cysteine 327. Asparagine 309 carries N-linked (GlcNAc...) asparagine glycosylation.

The protein localises to the secreted. The sequence is that of Immunoglobulin superfamily containing leucine-rich repeat protein (ISLR) from Bos taurus (Bovine).